The chain runs to 131 residues: Glycine cleavage system H protein (131 aa).

Positions 24 to 106 constitute a Lipoyl-binding domain; it reads VYCVGITEHA…YTDGWLFKIK (83 aa). Residue K65 is modified to N6-lipoyllysine.

Belongs to the GcvH family. In terms of assembly, the glycine cleavage system is composed of four proteins: P, T, L and H. It depends on (R)-lipoate as a cofactor.

The glycine cleavage system catalyzes the degradation of glycine. The H protein shuttles the methylamine group of glycine from the P protein to the T protein. The polypeptide is Glycine cleavage system H protein (Sodalis glossinidius (strain morsitans)).